Reading from the N-terminus, the 208-residue chain is FMN-dependent NADH:quinone oxidoreductase 1 (208 aa).

S10 is a binding site for FMN.

The protein belongs to the azoreductase type 1 family. Homodimer. The cofactor is FMN.

It catalyses the reaction 2 a quinone + NADH + H(+) = 2 a 1,4-benzosemiquinone + NAD(+). The enzyme catalyses N,N-dimethyl-1,4-phenylenediamine + anthranilate + 2 NAD(+) = 2-(4-dimethylaminophenyl)diazenylbenzoate + 2 NADH + 2 H(+). Functionally, quinone reductase that provides resistance to thiol-specific stress caused by electrophilic quinones. Contributes to resistance to 2-methylhydroquinone (2-MHQ) and catechol. Also exhibits azoreductase activity. Catalyzes the reductive cleavage of the azo bond in aromatic azo compounds to the corresponding amines. The chain is FMN-dependent NADH:quinone oxidoreductase 1 from Bacillus subtilis (strain 168).